Consider the following 447-residue polypeptide: Acyl-lipid (7-3)-desaturase (447 aa).

The region spanning Leu36–Ala94 is the Cytochrome b5 heme-binding domain. The heme site is built by His53 and His76. A run of 3 helical transmembrane segments spans residues Gly123–Leu143, Leu154–Asp174, and Ser185–Leu205. Positions His173–His177 match the Histidine box-1 motif. A Histidine box-2 motif is present at residues His208–His213. 3 consecutive transmembrane segments (helical) span residues Trp244 to Leu264, Leu286 to Leu306, and Ala315 to Ile335. The Histidine box-3 motif lies at Gln386–His390.

This sequence belongs to the fatty acid desaturase type 1 family. Fe(2+) is required as a cofactor.

It localises to the membrane. It carries out the reaction a (7Z,10Z,13Z,16Z,19Z)-docosapentaenoyl-containing glycerolipid + 2 Fe(II)-[cytochrome b5] + O2 + 2 H(+) = a (4Z,7Z,10Z,13Z,16Z,19Z)-docosahexaenoyl-containing glycerolipid + 2 Fe(III)-[cytochrome b5] + 2 H2O. It catalyses the reaction a (7Z,10Z,13Z,16Z)-docosatetraenoyl-containing glycerolipid + 2 Fe(II)-[cytochrome b5] + O2 + 2 H(+) = a (4Z,7Z,10Z,13Z,16Z)-docosapentaenoyl-containing glycerolipid + 2 Fe(III)-[cytochrome b5] + 2 H2O. In terms of biological role, fatty acid desaturase that introduces a cis double bond at the 4-position in 22-carbon polyunsaturated fatty acids that contain a Delta(7) double bond, resulting in the production of delta-4 desaturated fatty acid docosahexanoic acid (DHA). This chain is Acyl-lipid (7-3)-desaturase, found in Rebecca salina (Marine microalga).